The sequence spans 227 residues: Enolase-phosphatase E1 (227 aa).

It belongs to the HAD-like hydrolase superfamily. MasA/MtnC family. Monomer. Mg(2+) is required as a cofactor.

The catalysed reaction is 5-methylsulfanyl-2,3-dioxopentyl phosphate + H2O = 1,2-dihydroxy-5-(methylsulfanyl)pent-1-en-3-one + phosphate. Its pathway is amino-acid biosynthesis; L-methionine biosynthesis via salvage pathway; L-methionine from S-methyl-5-thio-alpha-D-ribose 1-phosphate: step 3/6. It participates in amino-acid biosynthesis; L-methionine biosynthesis via salvage pathway; L-methionine from S-methyl-5-thio-alpha-D-ribose 1-phosphate: step 4/6. Bifunctional enzyme that catalyzes the enolization of 2,3-diketo-5-methylthiopentyl-1-phosphate (DK-MTP-1-P) into the intermediate 2-hydroxy-3-keto-5-methylthiopentenyl-1-phosphate (HK-MTPenyl-1-P), which is then dephosphorylated to form the acireductone 1,2-dihydroxy-3-keto-5-methylthiopentene (DHK-MTPene). The protein is Enolase-phosphatase E1 of Azotobacter vinelandii (strain DJ / ATCC BAA-1303).